A 360-amino-acid polypeptide reads, in one-letter code: Phosphate acyltransferase (360 aa).

The segment covering 296–305 has biased composition (basic and acidic residues); sequence STLRREHLDR. Positions 296–360 are disordered; the sequence is STLRREHLDR…LRTAEPPGSL (65 aa). Basic residues predominate over residues 314–333; that stretch reads PRQRRRPRRQKRRAACRPRP. The span at 334–350 shows a compositional bias: low complexity; the sequence is RSAAGRAPGSGVRGAAG.

It belongs to the PlsX family. Homodimer. Probably interacts with PlsY.

It is found in the cytoplasm. It catalyses the reaction a fatty acyl-[ACP] + phosphate = an acyl phosphate + holo-[ACP]. Its pathway is lipid metabolism; phospholipid metabolism. Catalyzes the reversible formation of acyl-phosphate (acyl-PO(4)) from acyl-[acyl-carrier-protein] (acyl-ACP). This enzyme utilizes acyl-ACP as fatty acyl donor, but not acyl-CoA. This is Phosphate acyltransferase from Deinococcus radiodurans (strain ATCC 13939 / DSM 20539 / JCM 16871 / CCUG 27074 / LMG 4051 / NBRC 15346 / NCIMB 9279 / VKM B-1422 / R1).